The sequence spans 267 residues: MSSTPDHRPSKVSKELANAACDDFKRKAIDEAKKRAVAQRVDYDTFKNMVLTAHLKPITAPKQLNNDRPLPCWSFGVDGKMLKEQISQSQLPPTTPTEVPTTSGDFTRDWRRNCPTPDDKYRYLKLCGPEGLQAVFRVEISAEVLREMLAVLEACWLGHGGVAEEAEGGAGAALLEAAFVVQVLEAVSTAGRFSLTVKLLGSSAKPTLERLFSGLQSAVLASQAAHQGKQEQPAAAEAPHEEGGSTVDPCSPTRVAALQAMYGLPPS.

2 disordered regions span residues 86–111 (ISQS…RDWR) and 226–250 (HQGK…VDPC).

It belongs to the DNAAF19/PR46b family. Homodimer.

The protein localises to the cytoplasm. Its subcellular location is the cell projection. It localises to the cilium. The protein resides in the flagellum. In terms of biological role, dynein-attachment factor required for cilia motility. This chain is Dynein axonemal assembly factor 19 homolog (PR46b), found in Chlamydomonas reinhardtii (Chlamydomonas smithii).